A 391-amino-acid chain; its full sequence is Pyoverdine export membrane fusion protein PvdR (391 aa).

Positions 1 to 24 (MRRTRSTRRALLVAVCLSPLIALA) are cleaved as a signal peptide. The stretch at 108-180 (IEMLKAQLAE…QASLRSDEAE (73 aa)) forms a coiled coil. Positions 263-289 (LPVPPKPLDQSNQGGGSPTSGSGGQSG) are disordered. Residues 275 to 289 (QGGGSPTSGSGGQSG) are compositionally biased toward gly residues.

This sequence belongs to the membrane fusion protein (MFP) (TC 8.A.1) family. In terms of assembly, part of the tripartite efflux system PvdRT-OpmQ, which is composed of an inner membrane component with both ATPase and permease domains, PvdT, a periplasmic membrane fusion protein, PvdR, and an outer membrane component, OpmQ.

Its subcellular location is the periplasm. Functionally, part of the tripartite efflux system PvdRT-OpmQ required for the secretion into the extracellular milieu of the siderophore pyoverdine (PVD), which is involved in iron acquisition. This subunit is an adapter protein that stimulates the ATPase activity of PvdT and connects the inner and outer membrane components. The system is responsible for export of newly synthesized PVD after the final steps of biosynthesis have taken place in the periplasm. It is also responsible for recycling of PVD after internalization of ferri-PVD into the periplasm by the outer-membrane receptor FpvA and release of iron from PVD, thus making PVD available for new cycles of iron uptake. In addition, can expel unwanted metals complexed with PVD from the periplasm into the extracellular medium. Does not contribute to resistance to antibiotics belonging to the classes of tetracyclines, aminoglycosides, beta-lactams and macrolides, and chloramphenicol. In Pseudomonas aeruginosa (strain ATCC 15692 / DSM 22644 / CIP 104116 / JCM 14847 / LMG 12228 / 1C / PRS 101 / PAO1), this protein is Pyoverdine export membrane fusion protein PvdR.